Reading from the N-terminus, the 246-residue chain is Myogenic factor 5 (246 aa).

Residues 1–38 (RVRARIPGLSSPEGEFPEDFEPRELPPFGAPAPTEPAC) are disordered. Residues 73 to 124 (DRRKAATMRERRRLKKVNQAFETLKRCTTANPNQRLPKVEILRNAIRYIESL) form the bHLH domain. The tract at residues 210-246 (EEPGLPLRHAGSLSPGASIDSGARTPGSPPPRTYQAL) is disordered. A compositionally biased stretch (pro residues) spans 236–246 (GSPPPRTYQAL).

In terms of assembly, efficient DNA binding requires dimerization with another bHLH protein.

The protein resides in the nucleus. Its function is as follows. Acts as a transcriptional activator that promotes transcription of muscle-specific target genes and plays a role in muscle differentiation. Induces fibroblasts to differentiate into myoblasts. Probable sequence specific DNA-binding protein. This Coturnix japonica (Japanese quail) protein is Myogenic factor 5 (MYF5).